The following is a 1141-amino-acid chain: DNA-directed RNA polymerase subunit beta (1141 aa).

The segment at 1117 to 1141 (GINISREEPPGQLDDTPDTFSRGGM) is disordered.

It belongs to the RNA polymerase beta chain family. In terms of assembly, the RNAP catalytic core consists of 2 alpha, 1 beta, 1 beta' and 1 omega subunit. When a sigma factor is associated with the core the holoenzyme is formed, which can initiate transcription.

The catalysed reaction is RNA(n) + a ribonucleoside 5'-triphosphate = RNA(n+1) + diphosphate. Its function is as follows. DNA-dependent RNA polymerase catalyzes the transcription of DNA into RNA using the four ribonucleoside triphosphates as substrates. The chain is DNA-directed RNA polymerase subunit beta from Rubrobacter xylanophilus (strain DSM 9941 / JCM 11954 / NBRC 16129 / PRD-1).